The following is a 460-amino-acid chain: C4-dicarboxylate transport protein (460 aa).

The next 8 helical transmembrane spans lie at 21–38, 53–75, 88–110, 153–175, 196–218, 231–253, 301–323, and 363–385; these read LYFQ…IGHF, FIKL…GIAG, YALL…VVNV, IVGA…FGFA, VMFN…AMAF, LGQL…LGSI, VVGL…YLTM, and FIVL…ALIL. A disordered region spans residues 438–460; the sequence is PEDDLGVAEGPTPANAVNTTKTV.

The protein belongs to the dicarboxylate/amino acid:cation symporter (DAACS) (TC 2.A.23) family.

The protein resides in the cell inner membrane. In terms of biological role, responsible for the transport of dicarboxylates such as succinate, fumarate, and malate from the periplasm across the membrane. The polypeptide is C4-dicarboxylate transport protein (Pseudomonas syringae pv. tomato (strain ATCC BAA-871 / DC3000)).